Consider the following 222-residue polypeptide: Cytidylate kinase (222 aa).

ATP is bound at residue 9-17 (GPSGAGKST).

This sequence belongs to the cytidylate kinase family. Type 1 subfamily.

It localises to the cytoplasm. It catalyses the reaction CMP + ATP = CDP + ADP. The catalysed reaction is dCMP + ATP = dCDP + ADP. The chain is Cytidylate kinase from Thermodesulfovibrio yellowstonii (strain ATCC 51303 / DSM 11347 / YP87).